The sequence spans 129 residues: Flagellar assembly factor FliW 2 (129 aa).

It belongs to the FliW family. Interacts with translational regulator CsrA and flagellin(s).

It is found in the cytoplasm. Its function is as follows. Acts as an anti-CsrA protein, binds CsrA and prevents it from repressing translation of its target genes, one of which is flagellin. Binds to flagellin and participates in the assembly of the flagellum. This Helicobacter pylori (strain J99 / ATCC 700824) (Campylobacter pylori J99) protein is Flagellar assembly factor FliW 2.